The following is a 488-amino-acid chain: Glutamyl-tRNA(Gln) amidotransferase subunit A (488 aa).

Active-site charge relay system residues include K77 and S152. The active-site Acyl-ester intermediate is the S176.

It belongs to the amidase family. GatA subfamily. Heterotrimer of A, B and C subunits.

It carries out the reaction L-glutamyl-tRNA(Gln) + L-glutamine + ATP + H2O = L-glutaminyl-tRNA(Gln) + L-glutamate + ADP + phosphate + H(+). Allows the formation of correctly charged Gln-tRNA(Gln) through the transamidation of misacylated Glu-tRNA(Gln) in organisms which lack glutaminyl-tRNA synthetase. The reaction takes place in the presence of glutamine and ATP through an activated gamma-phospho-Glu-tRNA(Gln). The protein is Glutamyl-tRNA(Gln) amidotransferase subunit A of Streptococcus pyogenes serotype M12 (strain MGAS2096).